A 182-amino-acid chain; its full sequence is Large ribosomal subunit protein uL16 (182 aa).

The disordered stretch occupies residues 140–182 (EKPTQVGKAPPKSSFLPSDETETAAAQAGTEASSASSVTPLES). A compositionally biased stretch (low complexity) spans 162-176 (TAAAQAGTEASSASS).

The protein belongs to the universal ribosomal protein uL16 family. As to quaternary structure, part of the 50S ribosomal subunit.

Functionally, binds 23S rRNA and is also seen to make contacts with the A and possibly P site tRNAs. The protein is Large ribosomal subunit protein uL16 of Prochlorococcus marinus (strain SARG / CCMP1375 / SS120).